The sequence spans 310 residues: Coproporphyrin III ferrochelatase (310 aa).

Fe-coproporphyrin III-binding positions include Tyr13, Arg30, 46–47, Ser54, and Tyr125; that span reads RY. Fe(2+) is bound by residues His181 and Glu262.

The protein belongs to the ferrochelatase family.

The protein localises to the cytoplasm. The enzyme catalyses Fe-coproporphyrin III + 2 H(+) = coproporphyrin III + Fe(2+). It functions in the pathway porphyrin-containing compound metabolism; protoheme biosynthesis. Its function is as follows. Involved in coproporphyrin-dependent heme b biosynthesis. Catalyzes the insertion of ferrous iron into coproporphyrin III to form Fe-coproporphyrin III. This Halalkalibacterium halodurans (strain ATCC BAA-125 / DSM 18197 / FERM 7344 / JCM 9153 / C-125) (Bacillus halodurans) protein is Coproporphyrin III ferrochelatase.